The primary structure comprises 406 residues: Peptidase T (406 aa).

Zn(2+) is bound at residue His-81. Residue Asp-83 is part of the active site. Asp-142 contributes to the Zn(2+) binding site. The Proton acceptor role is filled by Glu-176. Residues Glu-177, Asp-199, and His-381 each coordinate Zn(2+).

The protein belongs to the peptidase M20B family. The cofactor is Zn(2+).

The protein resides in the cytoplasm. It catalyses the reaction Release of the N-terminal residue from a tripeptide.. Its function is as follows. Cleaves the N-terminal amino acid of tripeptides. The chain is Peptidase T from Streptococcus suis (strain 98HAH33).